A 946-amino-acid chain; its full sequence is Inositol-trisphosphate 3-kinase B (946 aa).

Disordered regions lie at residues 19–128 (EMKS…EEAK), 156–288 (AQSS…TRSC), 308–472 (ARVT…GIPS), 486–561 (KDLK…RKAC), and 580–638 (GALE…HTLD). Phosphoserine is present on residues S43, S49, and S71. Residues 83–105 (NSSSGSGSGSSGSSVSSPSWAGR) are compositionally biased toward low complexity. Phosphoserine occurs at positions 204 and 269. Positions 396-411 (TTVSVQSAESSDSLSW) are enriched in polar residues. A compositionally biased stretch (low complexity) spans 445–458 (GGSPTLGLLGGSPS). The span at 524–534 (TGVQSEGTWES) shows a compositional bias: polar residues. Low complexity predominate over residues 599 to 612 (SSSSASSTGFSSSY). ATP-binding positions include S679, K690, 730-732 (DDL), and D743. The substrate site is built by K745 and R766. The segment at 768 to 776 (DMYQKMIEV) is calmodulin-binding. A substrate-binding site is contributed by 793–800 (KPRYMQWR). ATP is bound by residues K817 and D897. K900 is a binding site for substrate.

Belongs to the inositol phosphokinase (IPK) family. As to quaternary structure, interacts with DMTN.

Its subcellular location is the cytoplasm. It localises to the cytoskeleton. It is found in the endoplasmic reticulum. It catalyses the reaction 1D-myo-inositol 1,4,5-trisphosphate + ATP = 1D-myo-inositol 1,3,4,5-tetrakisphosphate + ADP + H(+). Its activity is regulated as follows. IP3K is activated by calcium and calmodulin. Form B is much more sensitive to calcium/calmodulin than form A. Its function is as follows. Catalyzes the phosphorylation of 1D-myo-inositol 1,4,5-trisphosphate (InsP3) into 1D-myo-inositol 1,3,4,5-tetrakisphosphate and participates to the regulation of calcium homeostasis. The protein is Inositol-trisphosphate 3-kinase B of Homo sapiens (Human).